The primary structure comprises 66 residues: Large ribosomal subunit protein uL29 (66 aa).

The protein belongs to the universal ribosomal protein uL29 family.

This Francisella tularensis subsp. holarctica (strain LVS) protein is Large ribosomal subunit protein uL29.